Consider the following 238-residue polypeptide: Ribonuclease PH (238 aa).

Phosphate is bound by residues R86 and 124 to 126 (GTR).

This sequence belongs to the RNase PH family. As to quaternary structure, homohexameric ring arranged as a trimer of dimers.

The enzyme catalyses tRNA(n+1) + phosphate = tRNA(n) + a ribonucleoside 5'-diphosphate. Its function is as follows. Phosphorolytic 3'-5' exoribonuclease that plays an important role in tRNA 3'-end maturation. Removes nucleotide residues following the 3'-CCA terminus of tRNAs; can also add nucleotides to the ends of RNA molecules by using nucleoside diphosphates as substrates, but this may not be physiologically important. Probably plays a role in initiation of 16S rRNA degradation (leading to ribosome degradation) during starvation. This is Ribonuclease PH from Haemophilus influenzae (strain PittGG).